The chain runs to 1020 residues: LLGL scribble cell polarity complex component 2 (1020 aa).

14 WD repeats span residues 36-69, 76-117, 132-169, 193-227, 233-268, 282-324, 332-366, 388-464, 508-583, 592-653, 713-769, 778-830, 835-888, and 902-925; these read SALG…FMGL, VTQI…DESF, ITVV…DRTI, ALQE…LYHF, LENI…QPEP, AITR…GQQT, VIGF…VIDL, TCSH…YKLS, QKIF…FVLV, TSLA…LRQS, VRTL…KEIQ, GILV…VSAK, LTAL…VRYS, and VFTK…SLST. The residue at position 653 (Ser-653) is a Phosphoserine. The segment covering 653–669 has biased composition (basic residues); sequence SFRRMRRSRVSSRKRHP. Residues 653-689 are disordered; that stretch reads SFRRMRRSRVSSRKRHPAGPPGEAQEGSAKAERPGLQ. 2 disordered regions span residues 938–975 and 992–1020; these read AETK…PGLV and STLE…GGAE. 2 positions are modified to phosphoserine: Ser-965 and Ser-1015.

Belongs to the WD repeat L(2)GL family. As to quaternary structure, interacts with GPSM2/LGN, PRKCI/aPKC and PARD6B/Par-6. The complex is enhanced during mitosis. Interacts with DCAF1. In terms of processing, phosphorylated at Ser-653 by PRKCI. Phosphorylation is enhanced during cell polarization induced by calcium. Phosphorylation may occur during the cell-cell contact-induced cell polarization and may contribute to the segregation of LLGL2 from the PRKCI/aPKC and PARD6B/Par-6 complex.

Its subcellular location is the cytoplasm. In terms of biological role, part of a complex with GPSM2/LGN, PRKCI/aPKC and PARD6B/Par-6, which may ensure the correct organization and orientation of bipolar spindles for normal cell division. This complex plays roles in the initial phase of the establishment of epithelial cell polarity. The polypeptide is LLGL scribble cell polarity complex component 2 (LLGL2) (Homo sapiens (Human)).